The following is a 506-amino-acid chain: Putative amidase (506 aa).

Residues lysine 121 and serine 196 each act as charge relay system in the active site. Serine 220 serves as the catalytic Acyl-ester intermediate.

The protein belongs to the amidase family.

The enzyme catalyses a monocarboxylic acid amide + H2O = a monocarboxylate + NH4(+). The protein is Putative amidase of Synechocystis sp. (strain ATCC 27184 / PCC 6803 / Kazusa).